A 234-amino-acid chain; its full sequence is Triosephosphate isomerase (234 aa).

A substrate-binding site is contributed by 8 to 10; sequence NFK. Residue H90 is the Electrophile of the active site. E159 serves as the catalytic Proton acceptor. Substrate-binding residues include G165 and S197.

Belongs to the triosephosphate isomerase family. Homodimer.

The protein localises to the cytoplasm. The catalysed reaction is D-glyceraldehyde 3-phosphate = dihydroxyacetone phosphate. It participates in carbohydrate biosynthesis; gluconeogenesis. It functions in the pathway carbohydrate degradation; glycolysis; D-glyceraldehyde 3-phosphate from glycerone phosphate: step 1/1. In terms of biological role, involved in the gluconeogenesis. Catalyzes stereospecifically the conversion of dihydroxyacetone phosphate (DHAP) to D-glyceraldehyde-3-phosphate (G3P). The protein is Triosephosphate isomerase of Helicobacter pylori (strain G27).